The primary structure comprises 139 residues: Aspartate 1-decarboxylase (139 aa).

The Schiff-base intermediate with substrate; via pyruvic acid role is filled by Ser25. Ser25 carries the pyruvic acid (Ser) modification. Thr57 provides a ligand contact to substrate. Residue Tyr58 is the Proton donor of the active site. Position 73 to 75 (73 to 75 (GAA)) interacts with substrate.

It belongs to the PanD family. As to quaternary structure, heterooctamer of four alpha and four beta subunits. It depends on pyruvate as a cofactor. In terms of processing, is synthesized initially as an inactive proenzyme, which is activated by self-cleavage at a specific serine bond to produce a beta-subunit with a hydroxyl group at its C-terminus and an alpha-subunit with a pyruvoyl group at its N-terminus.

The protein localises to the cytoplasm. It catalyses the reaction L-aspartate + H(+) = beta-alanine + CO2. Its pathway is cofactor biosynthesis; (R)-pantothenate biosynthesis; beta-alanine from L-aspartate: step 1/1. Its function is as follows. Catalyzes the pyruvoyl-dependent decarboxylation of aspartate to produce beta-alanine. This chain is Aspartate 1-decarboxylase, found in Mycobacterium bovis (strain BCG / Tokyo 172 / ATCC 35737 / TMC 1019).